The following is a 112-amino-acid chain: B3 domain-containing protein At1g43171 (112 aa).

Residues 19–112 constitute a DNA-binding region (TF-B3); that stretch reads DIVGNVALPK…FENKFIVLNF (94 aa).

The protein localises to the nucleus. The chain is B3 domain-containing protein At1g43171 from Arabidopsis thaliana (Mouse-ear cress).